Consider the following 386-residue polypeptide: Acetate kinase (386 aa).

Mg(2+) is bound at residue N7. K14 contacts ATP. R78 contacts substrate. D135 functions as the Proton donor/acceptor in the catalytic mechanism. Residues 195 to 199 (HLGNG), 268 to 270 (DMR), and 316 to 320 (GIGEN) each bind ATP. Position 370 (E370) interacts with Mg(2+).

The protein belongs to the acetokinase family. Homodimer. The cofactor is Mg(2+). It depends on Mn(2+) as a cofactor.

Its subcellular location is the cytoplasm. It carries out the reaction acetate + ATP = acetyl phosphate + ADP. The protein operates within metabolic intermediate biosynthesis; acetyl-CoA biosynthesis; acetyl-CoA from acetate: step 1/2. Catalyzes the formation of acetyl phosphate from acetate and ATP. Can also catalyze the reverse reaction. This chain is Acetate kinase, found in Pseudarthrobacter chlorophenolicus (strain ATCC 700700 / DSM 12829 / CIP 107037 / JCM 12360 / KCTC 9906 / NCIMB 13794 / A6) (Arthrobacter chlorophenolicus).